Here is a 360-residue protein sequence, read N- to C-terminus: Phospho-N-acetylmuramoyl-pentapeptide-transferase (360 aa).

The Periplasmic segment spans residues 1 to 25; it reads MLVWLAEHLVKYYSGFNVFSYLTFR. The helical transmembrane segment at 26–46 threads the bilayer; it reads AIVSLLTALFISLWMGPRMIA. Over 47-71 the chain is Cytoplasmic; sequence RLQKLSFGQVVRNDGPESHFSKRGT. Residues 72-92 form a helical membrane-spanning segment; sequence PTMGGIMILTAIVISVLLWAY. A topological domain (periplasmic) is located at residue Pro-93. A helical membrane pass occupies residues 94 to 114; it reads SNPYVWCVLVVLIGYGIIGFV. The Cytoplasmic segment spans residues 115 to 131; sequence DDYRKVVRKDTKGLIAR. The helical transmembrane segment at 132–152 threads the bilayer; sequence WKYFWMSVIALGVAFALYLVG. Over 153-167 the chain is Periplasmic; that stretch reads KDTPVTQLVVPFFKD. The chain crosses the membrane as a helical span at residues 168-188; sequence VMPQLGLFYILLSYFVIVGTG. The Cytoplasmic portion of the chain corresponds to 189-198; that stretch reads NAVNLTDGLD. Residues 199 to 219 traverse the membrane as a helical segment; sequence GLAIMPTVFVAAGFALVAWAT. At 220–235 the chain is on the periplasmic side; it reads GNMNFANYLHIPYLRH. A helical transmembrane segment spans residues 236-256; sequence AGELVIVCTAIVGAGLGFLWF. Topologically, residues 257-262 are cytoplasmic; it reads NTYPAQ. A helical membrane pass occupies residues 263 to 283; it reads VFMGDVGSLALGGALGIIAVL. Residues 284-287 are Periplasmic-facing; it reads LRQE. A helical membrane pass occupies residues 288–308; it reads FLLVIMGGVFVVETLSVILQV. Over 309 to 337 the chain is Cytoplasmic; sequence GSFKLRGQRIFRMAPIHHHYELKGWPEPR. Residues 338-358 traverse the membrane as a helical segment; sequence VIVRFWIISLMLVLIGLATLK. The Periplasmic portion of the chain corresponds to 359–360; the sequence is VR.

The protein belongs to the glycosyltransferase 4 family. MraY subfamily. Mg(2+) is required as a cofactor.

It is found in the cell inner membrane. It catalyses the reaction UDP-N-acetyl-alpha-D-muramoyl-L-alanyl-gamma-D-glutamyl-meso-2,6-diaminopimeloyl-D-alanyl-D-alanine + di-trans,octa-cis-undecaprenyl phosphate = di-trans,octa-cis-undecaprenyl diphospho-N-acetyl-alpha-D-muramoyl-L-alanyl-D-glutamyl-meso-2,6-diaminopimeloyl-D-alanyl-D-alanine + UMP. The protein operates within cell wall biogenesis; peptidoglycan biosynthesis. In terms of biological role, catalyzes the initial step of the lipid cycle reactions in the biosynthesis of the cell wall peptidoglycan: transfers peptidoglycan precursor phospho-MurNAc-pentapeptide from UDP-MurNAc-pentapeptide onto the lipid carrier undecaprenyl phosphate, yielding undecaprenyl-pyrophosphoryl-MurNAc-pentapeptide, known as lipid I. This chain is Phospho-N-acetylmuramoyl-pentapeptide-transferase, found in Salmonella paratyphi C (strain RKS4594).